A 391-amino-acid polypeptide reads, in one-letter code: Cdc42 effector protein 1 (391 aa).

Residues serine 19 and serine 27 each carry the phosphoserine modification. Threonine 34 is modified (phosphothreonine). In terms of domain architecture, CRIB spans 38 to 52; it reads ISHPLGDFRHTMHVG. Serine 39 bears the Phosphoserine mark. Position 53 is an omega-N-methylarginine (arginine 53). Residues serine 65, serine 73, serine 77, serine 101, serine 113, serine 121, and serine 139 each carry the phosphoserine modification. A disordered region spans residues 163–189; sequence ISRLPRSEKPHDRDRDGSFPSEPGLRR. Positions 167–179 are enriched in basic and acidic residues; that stretch reads PRSEKPHDRDRDG. Phosphoserine is present on residues serine 180, serine 190, serine 192, and serine 195. 8 consecutive repeat copies span residues 220–226, 227–233, 234–240, 241–247, 248–254, 255–261, 262–268, and 269–275. The 8 X 7 AA tandem repeats of [PT]-[AT]-A-[ENT]-[PT]-[PTS]-[AG] stretch occupies residues 220-275; sequence PAAETPAPAANPPAPTANPTGPAANPPATTANPPAPAANPSAPAATPTGPAANPPA. The tract at residues 221–338 is disordered; the sequence is AAETPAPAAN…HHYPEMDARQ (118 aa). The span at 236-270 shows a compositional bias: low complexity; it reads ANPTGPAANPPATTANPPAPAANPSAPAATPTGPA. A Phosphoserine modification is found at serine 303. The segment covering 327 to 338 has biased composition (basic and acidic residues); it reads GGHHYPEMDARQ. A phosphoserine mark is found at serine 350 and serine 353. The tract at residues 354–391 is disordered; the sequence is LDEEWRAPQAGSRTPVPSTVQANTFEFADAEEDDEVKV. A compositionally biased stretch (polar residues) spans 364–377; that stretch reads GSRTPVPSTVQANT. Acidic residues predominate over residues 381–391; sequence ADAEEDDEVKV.

It belongs to the BORG/CEP family. As to quaternary structure, interacts with RHOQ and CDC42, in a GTP-dependent manner. Endothelial and bone marrow stromal cells.

It is found in the endomembrane system. It localises to the cytoplasm. The protein localises to the cytoskeleton. Its function is as follows. Probably involved in the organization of the actin cytoskeleton. Induced membrane extensions in fibroblasts. The sequence is that of Cdc42 effector protein 1 (CDC42EP1) from Homo sapiens (Human).